A 233-amino-acid polypeptide reads, in one-letter code: Eukaryotic translation initiation factor 4E-1 (233 aa).

The interval 1–51 (MVVEDALKTSASEDQAKTETNPKPREEDDEPEEGEIVGDEESASKPSKGIA) is disordered. A compositionally biased stretch (basic and acidic residues) spans 14 to 26 (DQAKTETNPKPRE). The span at 27 to 41 (EDDEPEEGEIVGDEE) shows a compositional bias: acidic residues. 2 EIF4G-binding regions span residues 55–58 (HALE) and 65–104 (FDSP…NNIR). Residues 76-81 (KQEDWG), lysine 108, and 126-127 (WE) contribute to the mRNA site. The cysteines at positions 131 and 169 are disulfide-linked. The EIF4G-binding stretch occupies residues 152 to 161 (YTLLGMIGEQ). MRNA-binding positions include 176–181 (RNRQEK) and 221–225 (MRHER).

Belongs to the eukaryotic initiation factor 4E family. In terms of assembly, EIF4F is a multi-subunit complex, the composition of which varies with external and internal environmental conditions. It is composed of at least EIF4A, EIF4E and EIF4G. EIF4E is also known to interact with other partners. In higher plants two isoforms of EIF4F have been identified, named isoform EIF4F and isoform EIF(iso)4F. Isoform EIF4F has subunits p220 and p26, whereas isoform EIF(iso)4F has subunits p82 and p28. (Microbial infection) Does not interact with the VPg of Plum pox virus (PPV) strain D. According to the redox status, the Cys-131-Cys-169 disulfide bridge may have a role in regulating protein function by affecting its ability to bind capped mRNA. In terms of tissue distribution, mostly expressed in leaves, flower buds, leaf buds and anthers, to a lower extent in roots, stems and green immature fruit, and, at low levels, in petals.

Its subcellular location is the nucleus. It localises to the cytoplasm. Its function is as follows. Component of the protein complex eIF4F, which is involved in the recognition of the mRNA cap, ATP-dependent unwinding of 5'-terminal secondary structure and recruitment of mRNA to the ribosome. Recognizes and binds the 7-methylguanosine-containing mRNA cap during an early step in the initiation of protein synthesis and facilitates ribosome binding by inducing the unwinding of the mRNAs secondary structures. (Microbial infection) Not involved in the plum pox virus (PPV) strain D infection process. This Prunus domestica (Garden plum) protein is Eukaryotic translation initiation factor 4E-1.